Here is a 553-residue protein sequence, read N- to C-terminus: COP9 signalosome complex subunit 10 (553 aa).

Acidic residues predominate over residues 21-46 (AEMEEDSDEMGVYEEETSQGAEEEVP). The disordered stretch occupies residues 21-47 (AEMEEDSDEMGVYEEETSQGAEEEVPL). Residues 298 to 474 (LRTHFSACLQ…DYVYFGDEPR (177 aa)) enclose the PCI domain.

In terms of assembly, component of a COP9 signalosome-like (CSN) complex.

The protein localises to the cytoplasm. It localises to the nucleus. Component of the COP9 signalosome (CSN) complex that acts as an regulator of the ubiquitin (Ubl) conjugation pathway by mediating the deneddylation of the cullin subunit of SCF-type E3 ubiquitin-protein ligase complexes. The CSN complex is involved in the regulation of the mating pheromone response. This Eremothecium gossypii (strain ATCC 10895 / CBS 109.51 / FGSC 9923 / NRRL Y-1056) (Yeast) protein is COP9 signalosome complex subunit 10 (RRI2).